The following is a 181-amino-acid chain: Alkyl hydroperoxide reductase AhpD (181 aa).

The active-site Proton donor is the C131. Residues C131 and C134 are joined by a disulfide bond. C134 functions as the Cysteine sulfenic acid (-SOH) intermediate in the catalytic mechanism.

The protein belongs to the AhpD family.

The enzyme catalyses N(6)-[(R)-dihydrolipoyl]-L-lysyl-[lipoyl-carrier protein] + a hydroperoxide = N(6)-[(R)-lipoyl]-L-lysyl-[lipoyl-carrier protein] + an alcohol + H2O. Functionally, antioxidant protein with alkyl hydroperoxidase activity. Required for the reduction of the AhpC active site cysteine residues and for the regeneration of the AhpC enzyme activity. The protein is Alkyl hydroperoxide reductase AhpD of Azorhizobium caulinodans (strain ATCC 43989 / DSM 5975 / JCM 20966 / LMG 6465 / NBRC 14845 / NCIMB 13405 / ORS 571).